The following is a 363-amino-acid chain: 3-isopropylmalate dehydrogenase (363 aa).

78–91 is an NAD(+) binding site; sequence GPKWEHLPPAEQPE. Residues Arg99, Arg109, Arg138, and Asp227 each coordinate substrate. Residues Asp227, Asp251, and Asp255 each contribute to the Mg(2+) site. 285–297 is an NAD(+) binding site; that stretch reads GSAPDIAGKDIAN.

The protein belongs to the isocitrate and isopropylmalate dehydrogenases family. LeuB type 1 subfamily. Homodimer. Mg(2+) is required as a cofactor. Mn(2+) serves as cofactor.

The protein resides in the cytoplasm. The catalysed reaction is (2R,3S)-3-isopropylmalate + NAD(+) = 4-methyl-2-oxopentanoate + CO2 + NADH. The protein operates within amino-acid biosynthesis; L-leucine biosynthesis; L-leucine from 3-methyl-2-oxobutanoate: step 3/4. Catalyzes the oxidation of 3-carboxy-2-hydroxy-4-methylpentanoate (3-isopropylmalate) to 3-carboxy-4-methyl-2-oxopentanoate. The product decarboxylates to 4-methyl-2 oxopentanoate. The sequence is that of 3-isopropylmalate dehydrogenase from Pectobacterium atrosepticum (strain SCRI 1043 / ATCC BAA-672) (Erwinia carotovora subsp. atroseptica).